The following is a 164-amino-acid chain: Sperm axonemal maintenance protein CFAP97D1 (164 aa).

Positions 61–88 (LSKIQGEQKRIDKIEYENRQLCQKIANA) form a coiled coil.

This sequence belongs to the CFAP97 family. In terms of tissue distribution, expressed exclusively in testis.

Its function is as follows. Required for male fertility through its role in axonemal doublet stabilization which is essential for sperm motility and fertilization. The sequence is that of Sperm axonemal maintenance protein CFAP97D1 (Cfap97d1) from Mus musculus (Mouse).